The primary structure comprises 359 residues: CDP-glucose 4,6-dehydratase (359 aa).

The protein belongs to the NAD(P)-dependent epimerase/dehydratase family. The cofactor is NAD(+).

The enzyme catalyses CDP-D-glucose = CDP-4-dehydro-6-deoxy-D-glucose + H2O. It functions in the pathway nucleotide-sugar biosynthesis; CDP-3,6-dideoxy-D-mannose biosynthesis; CDP-3,6-dideoxy-D-mannose from CTP and alpha-D-glucose 1-phosphate: step 2/5. It participates in bacterial outer membrane biogenesis; LPS O-antigen biosynthesis. In Salmonella typhimurium (strain LT2 / SGSC1412 / ATCC 700720), this protein is CDP-glucose 4,6-dehydratase (rfbG).